We begin with the raw amino-acid sequence, 599 residues long: Histone-arginine methyltransferase CARMER (599 aa).

In terms of domain architecture, SAM-dependent MTase PRMT-type spans 127-434 (ASQYFQFYGY…QRQSYDVEID (308 aa)). S-adenosyl-L-methionine contacts are provided by Q140, R149, G173, E195, E224, and T252. The residue at position 487 (R487) is an Asymmetric dimethylarginine; by autocatalysis.

Belongs to the class I-like SAM-binding methyltransferase superfamily. Protein arginine N-methyltransferase family. In terms of assembly, homodimer. Post-translationally, the dimethylated protein is the major form.

The protein resides in the cytoplasm. The protein localises to the nucleus. The enzyme catalyses L-arginyl-[protein] + 2 S-adenosyl-L-methionine = N(omega),N(omega)-dimethyl-L-arginyl-[protein] + 2 S-adenosyl-L-homocysteine + 2 H(+). Functionally, methylates (mono- and asymmetric dimethylation) the guanidino nitrogens of arginyl residues in proteins. May methylate histone H3 at 'Arg-17' and activate transcription via chromatin remodeling. This Culex quinquefasciatus (Southern house mosquito) protein is Histone-arginine methyltransferase CARMER (Art4).